Reading from the N-terminus, the 72-residue chain is MKKWAVIISAVGLAFAVSGCSSDYVMATKDGRMILTDGKPEIDDDTGLVSYHDQQGNAMQINRDDVSQIIER.

The N-terminal stretch at 1–19 (MKKWAVIISAVGLAFAVSG) is a signal peptide. Cysteine 20 carries the N-palmitoyl cysteine lipid modification. A lipid anchor (S-diacylglycerol cysteine) is attached at cysteine 20.

It to E.coli YgdI.

The protein resides in the cell membrane. This is an uncharacterized protein from Escherichia coli O6:H1 (strain CFT073 / ATCC 700928 / UPEC).